The primary structure comprises 417 residues: Voltage-gated potassium channel Kch (417 aa).

The Cytoplasmic segment spans residues 1-21; it reads MSHWATFKQTATNLWVTLRHD. Residues 22-41 traverse the membrane as a helical segment; that stretch reads ILALAVFLNGLLIFKTIYGM. The Periplasmic segment spans residues 42–63; it reads SVNLLDIFHIKAFSELDLSLLA. The chain crosses the membrane as a helical span at residues 64 to 83; that stretch reads NAPLFMLGVFLVLNSIGLLF. The Cytoplasmic portion of the chain corresponds to 84–86; it reads RAK. A helical membrane pass occupies residues 87 to 104; it reads LAWAISIILLLIALIYTL. Over 105-110 the chain is Periplasmic; that stretch reads HFYPWL. Residues 111–127 form a helical membrane-spanning segment; sequence KFSIGFCIFTLVFLLIL. Residues 128-140 lie on the Cytoplasmic side of the membrane; that stretch reads RKDFSHSSAAAGT. A helical transmembrane segment spans residues 141–160; it reads IFAFISFTTLLFYSTYGALY. Residues 161–199 are Periplasmic-facing; that stretch reads LSEGFNPRIESLMTAFYFSIETMSTVGYGDIVPVSESAR. The Selectivity filter signature appears at 185–190; that stretch reads TVGYGD. A helical transmembrane segment spans residues 200–220; the sequence is LFTISVIISGITVFATSMTSI. The Cytoplasmic portion of the chain corresponds to 221–417; it reads FGPLIRGGFN…KADSKESAQK (197 aa). One can recognise an RCK N-terminal domain in the interval 243-363; sequence KDHFIVCGHS…IKMVHPDIIL (121 aa).

It belongs to the potassium channel family. As to quaternary structure, dimer.

Its subcellular location is the cell inner membrane. Functionally, k(+)-specific ion channel. May play a role in the defense against osmotic shock. This chain is Voltage-gated potassium channel Kch (kch), found in Escherichia coli (strain K12).